The chain runs to 338 residues: Glyceraldehyde-3-phosphate dehydrogenase 1 (338 aa).

NAD(+) is bound by residues 13-14 and glycine 111; that span reads TI. A D-glyceraldehyde 3-phosphate-binding site is contributed by 140–142; the sequence is SCN. Catalysis depends on cysteine 141, which acts as the Nucleophile. Arginine 169 lines the NAD(+) pocket. Residue 195 to 196 coordinates D-glyceraldehyde 3-phosphate; the sequence is HG. Position 300 (glutamine 300) interacts with NAD(+).

This sequence belongs to the glyceraldehyde-3-phosphate dehydrogenase family. In terms of assembly, homotetramer.

The protein localises to the cytoplasm. It catalyses the reaction D-glyceraldehyde 3-phosphate + phosphate + NADP(+) = (2R)-3-phospho-glyceroyl phosphate + NADPH + H(+). The enzyme catalyses D-glyceraldehyde 3-phosphate + phosphate + NAD(+) = (2R)-3-phospho-glyceroyl phosphate + NADH + H(+). Its pathway is carbohydrate degradation; glycolysis; pyruvate from D-glyceraldehyde 3-phosphate: step 1/5. The polypeptide is Glyceraldehyde-3-phosphate dehydrogenase 1 (Methanosarcina barkeri (strain Fusaro / DSM 804)).